The primary structure comprises 282 residues: 2,3,4,5-tetrahydropyridine-2,6-dicarboxylate N-succinyltransferase (282 aa).

Substrate is bound by residues R109 and D146.

It belongs to the transferase hexapeptide repeat family. In terms of assembly, homotrimer.

Its subcellular location is the cytoplasm. The enzyme catalyses (S)-2,3,4,5-tetrahydrodipicolinate + succinyl-CoA + H2O = (S)-2-succinylamino-6-oxoheptanedioate + CoA. The protein operates within amino-acid biosynthesis; L-lysine biosynthesis via DAP pathway; LL-2,6-diaminopimelate from (S)-tetrahydrodipicolinate (succinylase route): step 1/3. This chain is 2,3,4,5-tetrahydropyridine-2,6-dicarboxylate N-succinyltransferase, found in Bartonella henselae (strain ATCC 49882 / DSM 28221 / CCUG 30454 / Houston 1) (Rochalimaea henselae).